A 303-amino-acid chain; its full sequence is Coenzyme PQQ synthesis protein B (303 aa).

This sequence belongs to the PqqB family.

It participates in cofactor biosynthesis; pyrroloquinoline quinone biosynthesis. May be involved in the transport of PQQ or its precursor to the periplasm. The sequence is that of Coenzyme PQQ synthesis protein B from Pseudomonas putida (strain ATCC 700007 / DSM 6899 / JCM 31910 / BCRC 17059 / LMG 24140 / F1).